The sequence spans 225 residues: Glutathione S-transferase Mu 3 (225 aa).

The GST N-terminal domain occupies 5–92; sequence SSMVLGYWDI…YIARKHNMCG (88 aa). Glutathione is bound by residues 11–12, 50–54, and 63–64; these read YW, WLDVK, and NL. Lys-54 participates in a covalent cross-link: Glycyl lysine isopeptide (Lys-Gly) (interchain with G-Cter in SUMO2). Lys-73 participates in a covalent cross-link: Glycyl lysine isopeptide (Lys-Gly) (interchain with G-Cter in SUMO2). 76–77 is a glutathione binding site; sequence QS. A GST C-terminal domain is found at 94 to 212; that stretch reads TEEEKIRVDI…QSDQFFKMPI (119 aa). Tyr-120 is a substrate binding site.

This sequence belongs to the GST superfamily. Mu family. In terms of assembly, homodimer.

The protein localises to the cytoplasm. It carries out the reaction RX + glutathione = an S-substituted glutathione + a halide anion + H(+). Conjugation of reduced glutathione to a wide number of exogenous and endogenous hydrophobic electrophiles. May govern uptake and detoxification of both endogenous compounds and xenobiotics at the testis and brain blood barriers. In Macaca fuscata fuscata (Japanese macaque), this protein is Glutathione S-transferase Mu 3 (GSTM3).